We begin with the raw amino-acid sequence, 567 residues long: Lipase maturation factor 1 (567 aa).

The tract at residues 1 to 39 (MRPDSPTMAAPAESLRRRKTGYSDPEPESPPAPGRGPAG) is disordered. Topologically, residues 1–49 (MRPDSPTMAAPAESLRRRKTGYSDPEPESPPAPGRGPAGSPAHLHTGTF) are cytoplasmic. The chain crosses the membrane as a helical span at residues 50–72 (WLTRIVLLKALAFVYFVAFLVAF). Residues 73-127 (HQNKQLIGDRGLLPCRVFLKNFQQYFQDRTSWEVFSYMPTILWLMDWSDMNSNLD) are Lumenal-facing. A helical membrane pass occupies residues 128 to 151 (LLALLGLGISSFVLITGCANMLLM). Over 152 to 207 (AALWGLYMSLVNVGHVWYSFGWESQLLETGFLGIFLCPLWTLSRLPQHTPTSRIVL) the chain is Cytoplasmic. Residues 208–221 (WGFRWLIFRIMLGA) traverse the membrane as a helical segment. Over 222–292 (GLIKIRGDRC…LGRRACIIHG (71 aa)) the chain is Lumenal. The chain crosses the membrane as a helical span at residues 293–321 (VLQILFQAVLIVSGNLSFLNWLTMVPSLA). Residues 322-367 (CFDDATLGFLFPSGPGSLKDRVLQMQRDIRGARPEPRFGSVVRRAA) are Cytoplasmic-facing. Residues 368–388 (NVSLGVLLAWLSVPVVLNLLS) form a helical membrane-spanning segment. Over 389–567 (SRQVMNTHFN…DRGWPLPGPL (179 aa)) the chain is Lumenal.

The protein belongs to the lipase maturation factor family. In terms of assembly, interacts with LPL and SEL1L.

The protein resides in the endoplasmic reticulum membrane. Its function is as follows. Involved in the maturation of specific proteins in the endoplasmic reticulum. Required for maturation and transport of active lipoprotein lipase (LPL) through the secretory pathway. Each LMF1 molecule chaperones 50 or more molecules of LPL. This is Lipase maturation factor 1 (LMF1) from Homo sapiens (Human).